The sequence spans 606 residues: MTVVGNPRSWSCRWLPILILLLGTGHGPGVEGVTHYKAGDPVILYVNKVGPYHNPQETYHYYQLPVCCPEKIRHKSLSLGEVLDGDRMAESLYEIRFRENVEKRILCHMQLSSAQVEQLRQAIEELYYFEFVVDDLPIRGFVGYMEESGFLPHSHKIGLWTHLDFHLEFRGDRIIFANVSVRDVKPHSLDGLRPDEFLGLTHAYSVRWSETSVERRSDRRHGDDGGFFPRTLEIHWLSIINSMVLVFLLVGFVAVILMRVLRNDLARYNLDEETTSAGSGDDFDQGDNGWKIIHTDVFRFPPYRGLLCAVLGVGAQFLALGTGIIVMALLGMFNVHRHGAINSAAILLYALTCCISGYVSSHFYRQIGGERWVWNIILTTSLFSVPFFLTWSVVNSVHWANGSTQALPATTILLLLTVWLLVGFPLTVIGGIFGKNNASPFDAPCRTKNIAREIPPQPWYKSTVIHMTVGGFLPFSAISVELYYIFATVWGREQYTLYGILFFVFAILLSVGACISIALTYFQLSGEDYRWWWRSVLSVGSTGLFIFLYSVFYYARRSNMSGAVQTVEFFGYSLLTGYVFFLMLGTISFFSSLKFIRYIYVNLKMD.

Residues 1 to 27 form the signal peptide; sequence MTVVGNPRSWSCRWLPILILLLGTGHG. The N-linked (GlcNAc...) asparagine glycan is linked to Asn178. The next 4 membrane-spanning stretches (helical) occupy residues 237–257, 310–330, 339–359, and 373–393; these read LSIINSMVLVFLLVGFVAVIL, VLGVGAQFLALGTGIIVMALL, GAINSAAILLYALTCCISGYV, and VWNIILTTSLFSVPFFLTWSV. Asn401 carries N-linked (GlcNAc...) asparagine glycosylation. 4 helical membrane-spanning segments follow: residues 412–432, 469–489, 499–519, and 535–555; these read ILLLLTVWLLVGFPLTVIGGI, VGGFLPFSAISVELYYIFATV, GILFFVFAILLSVGACISIAL, and SVLSVGSTGLFIFLYSVFYYA. The N-linked (GlcNAc...) asparagine glycan is linked to Asn559. A helical membrane pass occupies residues 570 to 590; it reads FGYSLLTGYVFFLMLGTISFF.

It belongs to the nonaspanin (TM9SF) (TC 9.A.2) family.

The protein resides in the lysosome membrane. It is found in the cytoplasmic vesicle. It localises to the autophagosome membrane. In terms of biological role, plays an essential role in autophagy. This is Transmembrane 9 superfamily member 1 (TM9SF1) from Pongo abelii (Sumatran orangutan).